A 304-amino-acid polypeptide reads, in one-letter code: NADH-cytochrome b5 reductase 2 (304 aa).

Residues glycine 6–leucine 26 form a helical membrane-spanning segment. The 113-residue stretch at glutamine 43 to lysine 155 folds into the FAD-binding FR-type domain. FAD is bound by residues aspartate 135 to aspartate 165 and phenylalanine 174 to leucine 209.

Belongs to the flavoprotein pyridine nucleotide cytochrome reductase family. Requires FAD as cofactor.

Its subcellular location is the membrane. It catalyses the reaction 2 Fe(III)-[cytochrome b5] + NADH = 2 Fe(II)-[cytochrome b5] + NAD(+) + H(+). Functionally, NADH-cytochrome b5 reductases are involved in desaturation and elongation of fatty acids, cholesterol biosynthesis and drug metabolism. This Gallus gallus (Chicken) protein is NADH-cytochrome b5 reductase 2 (CYB5R2).